A 115-amino-acid chain; its full sequence is Toxin-like structure LSTX-D1 (115 aa).

Residues 1-22 form the signal peptide; that stretch reads MKVLVLFSVLFLTLFSYSSTEA. Positions 23-44 are excised as a propeptide; that stretch reads IDEFDSDAEEDMLSLMANEQVR. 4 disulfides stabilise this stretch: cysteine 48-cysteine 63, cysteine 55-cysteine 72, cysteine 62-cysteine 87, and cysteine 74-cysteine 85.

Belongs to the neurotoxin 19 (CSTX) family. 01 subfamily. Expressed by the venom gland.

Its subcellular location is the secreted. The protein is Toxin-like structure LSTX-D1 of Lycosa singoriensis (Wolf spider).